A 402-amino-acid chain; its full sequence is Serine/threonine transporter SstT (402 aa).

The next 8 helical transmembrane spans lie at 17-37 (IAIG…ITVI), 44-64 (FVGG…ANAL), 78-98 (IIVL…ISHY), 138-158 (ALSQ…GFAM), 179-199 (IVRW…FDTI), 212-232 (VLIL…NPII), 295-315 (MAGA…TLGI), and 336-356 (ASGI…LFGI).

It belongs to the dicarboxylate/amino acid:cation symporter (DAACS) (TC 2.A.23) family.

Its subcellular location is the cell membrane. The catalysed reaction is L-serine(in) + Na(+)(in) = L-serine(out) + Na(+)(out). It carries out the reaction L-threonine(in) + Na(+)(in) = L-threonine(out) + Na(+)(out). Functionally, involved in the import of serine and threonine into the cell, with the concomitant import of sodium (symport system). The sequence is that of Serine/threonine transporter SstT from Streptococcus thermophilus (strain ATCC BAA-250 / LMG 18311).